The following is a 558-amino-acid chain: Formate--tetrahydrofolate ligase (558 aa).

66 to 73 (TPAGEGKT) contacts ATP.

Belongs to the formate--tetrahydrofolate ligase family.

It catalyses the reaction (6S)-5,6,7,8-tetrahydrofolate + formate + ATP = (6R)-10-formyltetrahydrofolate + ADP + phosphate. The protein operates within one-carbon metabolism; tetrahydrofolate interconversion. The sequence is that of Formate--tetrahydrofolate ligase from Neisseria meningitidis serogroup B (strain ATCC BAA-335 / MC58).